A 436-amino-acid chain; its full sequence is UDP-N-acetylglucosamine 1-carboxyvinyltransferase 1 (436 aa).

22-23 (KN) serves as a coordination point for phosphoenolpyruvate. Arg93 is a binding site for UDP-N-acetyl-alpha-D-glucosamine. Cys117 acts as the Proton donor in catalysis. Cys117 carries the 2-(S-cysteinyl)pyruvic acid O-phosphothioketal modification. Residues 122–126 (RPIDQ), Asp306, and Val328 contribute to the UDP-N-acetyl-alpha-D-glucosamine site.

This sequence belongs to the EPSP synthase family. MurA subfamily.

It is found in the cytoplasm. The enzyme catalyses phosphoenolpyruvate + UDP-N-acetyl-alpha-D-glucosamine = UDP-N-acetyl-3-O-(1-carboxyvinyl)-alpha-D-glucosamine + phosphate. The protein operates within cell wall biogenesis; peptidoglycan biosynthesis. Functionally, cell wall formation. Adds enolpyruvyl to UDP-N-acetylglucosamine. The protein is UDP-N-acetylglucosamine 1-carboxyvinyltransferase 1 of Bacillus licheniformis (strain ATCC 14580 / DSM 13 / JCM 2505 / CCUG 7422 / NBRC 12200 / NCIMB 9375 / NCTC 10341 / NRRL NRS-1264 / Gibson 46).